The following is a 123-amino-acid chain: Large ribosomal subunit protein bL19 (123 aa).

The protein belongs to the bacterial ribosomal protein bL19 family.

Functionally, this protein is located at the 30S-50S ribosomal subunit interface and may play a role in the structure and function of the aminoacyl-tRNA binding site. This Ureaplasma parvum serovar 3 (strain ATCC 27815 / 27 / NCTC 11736) protein is Large ribosomal subunit protein bL19.